The sequence spans 194 residues: UPF0301 protein FTA_1286 (194 aa).

It belongs to the UPF0301 (AlgH) family.

This Francisella tularensis subsp. holarctica (strain FTNF002-00 / FTA) protein is UPF0301 protein FTA_1286.